We begin with the raw amino-acid sequence, 521 residues long: Ribonuclease Y (521 aa).

The chain crosses the membrane as a helical span at residues 10-30 (LIITAGVSIALAIVAFFLGYL). The KH domain occupies 210–270 (TVSVVTLPND…IRREIAKLTL (61 aa)). The HD domain occupies 336 to 430 (VLAHSIEVAN…IQAADSVSAA (95 aa)).

This sequence belongs to the RNase Y family.

The protein resides in the cell membrane. In terms of biological role, endoribonuclease that initiates mRNA decay. The protein is Ribonuclease Y of Caldicellulosiruptor saccharolyticus (strain ATCC 43494 / DSM 8903 / Tp8T 6331).